The chain runs to 153 residues: Endoribonuclease YbeY (153 aa).

3 residues coordinate Zn(2+): His118, His122, and His128.

Belongs to the endoribonuclease YbeY family. It depends on Zn(2+) as a cofactor.

It localises to the cytoplasm. In terms of biological role, single strand-specific metallo-endoribonuclease involved in late-stage 70S ribosome quality control and in maturation of the 3' terminus of the 16S rRNA. The sequence is that of Endoribonuclease YbeY from Staphylococcus saprophyticus subsp. saprophyticus (strain ATCC 15305 / DSM 20229 / NCIMB 8711 / NCTC 7292 / S-41).